The following is a 554-amino-acid chain: Gamma-aminobutyric acid receptor subunit alpha-4 (554 aa).

The N-terminal stretch at 1–35 (MVSAKKVPAIALSAGVSFALLRFLCLAVCLNESPG) is a signal peptide. The Extracellular portion of the chain corresponds to 36-259 (QNQKEEKLCT…FHLRRKMGYF (224 aa)). Residue Asn47 is glycosylated (N-linked (GlcNAc...) asparagine). Residue Arg100 coordinates 4-aminobutanoate. 2 N-linked (GlcNAc...) asparagine glycosylation sites follow: Asn144 and Asn157. Thr163 is a 4-aminobutanoate binding site. Cys172 and Cys186 are disulfide-bonded. The helical transmembrane segment at 260-280 (MIQTYIPCIMTVILSQVSFWI) threads the bilayer. At 281–284 (NKES) the chain is on the cytoplasmic side. A helical membrane pass occupies residues 285 to 305 (VPARTVFGITTVLTMTTLSIS). At 306–318 (ARHSLPKVSYATA) the chain is on the extracellular side. A helical membrane pass occupies residues 319–341 (MDWFIAVCFAFVFSALIEFAAVN). The Cytoplasmic segment spans residues 342-517 (YFTNIQMEKA…PPPSGSGTSK (176 aa)). Disordered stretches follow at residues 350-381 (KAKR…QNTN), 397-435 (ESDV…SPNP), 452-471 (PSAS…ASVG), and 495-515 (ATGK…GSGT). Residues 410 to 422 (SSKSSTVVQESSK) show a composition bias toward low complexity. Over residues 502 to 511 (TPPPSAPPPS) the composition is skewed to pro residues. Residues 518–540 (IDKYARILFPVTFGAFNMVYWVV) form a helical membrane-spanning segment. Residues 541-554 (YLSKDTMEKSESLM) are Extracellular-facing.

The protein belongs to the ligand-gated ion channel (TC 1.A.9) family. Gamma-aminobutyric acid receptor (TC 1.A.9.5) subfamily. GABRA4 sub-subfamily. Heteropentamer, formed by a combination of alpha (GABRA1-6), beta (GABRB1-3), gamma (GABRG1-3), delta (GABRD), epsilon (GABRE), rho (GABRR1-3), pi (GABRP) and theta (GABRQ) chains, each subunit exhibiting distinct physiological and pharmacological properties. As to expression, expressed in the brain.

It is found in the cell membrane. Its subcellular location is the postsynaptic cell membrane. The catalysed reaction is chloride(in) = chloride(out). Its activity is regulated as follows. Potentiated by histamine. Its function is as follows. Alpha subunit of the heteropentameric ligand-gated chloride channel gated by gamma-aminobutyric acid (GABA), a major inhibitory neurotransmitter in the brain. GABA-gated chloride channels, also named GABA(A) receptors (GABAAR), consist of five subunits arranged around a central pore and contain GABA active binding site(s) located at the alpha and beta subunit interface(s). When activated by GABA, GABAARs selectively allow the flow of chloride anions across the cell membrane down their electrochemical gradient. GABAARs containing alpha-4 are predominantly extrasynaptic, contributing to tonic inhibition in dentate granule cells and thalamic relay neurons. Extrasynaptic alpha-4-containing GABAARs control levels of excitability and network activity. GABAAR containing alpha-4-beta-3-delta subunits can simultaneously bind GABA and histamine where histamine binds at the interface of two neighboring beta subunits, which may be involved in the regulation of sleep and wakefulness. This is Gamma-aminobutyric acid receptor subunit alpha-4 from Homo sapiens (Human).